The sequence spans 87 residues: Putative sodium channel toxin Ts38 (87 aa).

A signal peptide spans 1-22 (MKHLKFYSILFLFSIFVYKVNA). 3 disulfide bridges follow: cysteine 42/cysteine 65, cysteine 51/cysteine 72, and cysteine 55/cysteine 74.

This sequence belongs to the long (3 C-C) scorpion toxin superfamily. Sodium channel inhibitor family. As to expression, expressed by the venom gland.

The protein localises to the secreted. Putative sodium channel toxin. This is Putative sodium channel toxin Ts38 from Tityus serrulatus (Brazilian scorpion).